Here is a 77-residue protein sequence, read N- to C-terminus: Large ribosomal subunit protein bL28 (77 aa).

Belongs to the bacterial ribosomal protein bL28 family.

In Albidiferax ferrireducens (strain ATCC BAA-621 / DSM 15236 / T118) (Rhodoferax ferrireducens), this protein is Large ribosomal subunit protein bL28.